Consider the following 382-residue polypeptide: Heme A synthase (382 aa).

8 helical membrane passes run 25 to 45 (GAVR…VAVG), 112 to 132 (LLGR…WARG), 141 to 161 (GLLG…IMVA), 176 to 196 (LALH…LAAG), 211 to 231 (VVAC…GLVA), 270 to 290 (LALV…VAIA), 303 to 323 (AAAG…GLGI), and 327 to 347 (LLHV…AVLI). Residue histidine 277 coordinates heme. A heme-binding site is contributed by histidine 338.

The protein belongs to the COX15/CtaA family. Type 2 subfamily. Interacts with CtaB. Requires heme b as cofactor.

The protein localises to the cell membrane. It carries out the reaction Fe(II)-heme o + 2 A + H2O = Fe(II)-heme a + 2 AH2. Its pathway is porphyrin-containing compound metabolism; heme A biosynthesis; heme A from heme O: step 1/1. Functionally, catalyzes the conversion of heme O to heme A by two successive hydroxylations of the methyl group at C8. The first hydroxylation forms heme I, the second hydroxylation results in an unstable dihydroxymethyl group, which spontaneously dehydrates, resulting in the formyl group of heme A. The protein is Heme A synthase of Methylorubrum extorquens (strain CM4 / NCIMB 13688) (Methylobacterium extorquens).